The following is a 376-amino-acid chain: MMAFITVKPEIKNNLANVAKELKIDEELLKSANRSAQKHQLYCPGYVIEEHSGKELQTIQDIKRFLQPRQLKLSDSWIEQEKIYDDSAVEKEIKKIIDVFPFVSCREIGRSVLGRPIWELKAGGEHAVKKVHMNASFHANEWITTSVLLKWFKEYCMSLCCNSPFFGFSPIKLFNSTSLSLVPLVNPDGVDLVLNGSEVMGARRDELERLNEHRPNFNEWKANINGVDLNKQFPSLWEIEKYRKPTAPSYRDFPGISPLTEPESIAMYRLITENPPDRLLALHTQGEEIYWGYKGLEPEESAAVIKEFEELSGNIYKGVRDIDSYAGFRDWFIHHYFKEGYTVELGKGQNPLPFQQFSHIYNATSGILWRALFFHE.

Residues Lys82 to Leu372 form the Peptidase M14 domain. Zn(2+) contacts are provided by His138, Glu141, and His283. The Proton donor/acceptor role is filled by Glu344.

It belongs to the peptidase M14 family. It depends on Zn(2+) as a cofactor.

This is an uncharacterized protein from Bacillus subtilis (strain 168).